We begin with the raw amino-acid sequence, 50 residues long: Bacteriocin BacSp222 (50 aa).

Methionine 1 is subject to N-formylmethionine.

It localises to the secreted. Has bacteriolytic activity against Gram-positive bacteria B.subtilis, L.lactis and M.luteus and several species from genus Staphylococcus including methicillin-resistant S.aureus, with MIC values ranging from 0.11 uM to 7.8 uM. Has no activity against Gram-negative bacteria or fungi. In vitro, has a dose-dependent cytolytic effect on eukaryotic cells. This is Bacteriocin BacSp222 from Staphylococcus pseudintermedius.